A 753-amino-acid polypeptide reads, in one-letter code: Pesticidal crystal protein Cry20Aa (753 aa).

Residues 680–696 are compositionally biased toward polar residues; it reads DTTYQPSYDNYNQNASG. Residues 680–721 form a disordered region; the sequence is DTTYQPSYDNYNQNASGTYDDGYNPNASDSYDQSYTNNYSQN. Low complexity predominate over residues 712 to 721; sequence QSYTNNYSQN.

This sequence belongs to the delta endotoxin family. Has low mosquitocidal activity probably due to rapid proteolysis to inactive 56 kDa and 43 kDa proteins.

Its function is as follows. Promotes colloidosmotic lysis by binding to the midgut epithelial cells of mosquitos. Active against Aedes aegypti and Culex quinquefasciatus larvae. This is Pesticidal crystal protein Cry20Aa (cry20Aa) from Bacillus thuringiensis subsp. fukuokaensis.